We begin with the raw amino-acid sequence, 425 residues long: Serine hydroxymethyltransferase (425 aa).

(6S)-5,6,7,8-tetrahydrofolate-binding positions include Leu-125 and 129 to 131; that span reads GHL. Residue Lys-234 is modified to N6-(pyridoxal phosphate)lysine.

This sequence belongs to the SHMT family. In terms of assembly, homodimer. Pyridoxal 5'-phosphate serves as cofactor.

The protein localises to the cytoplasm. It carries out the reaction (6R)-5,10-methylene-5,6,7,8-tetrahydrofolate + glycine + H2O = (6S)-5,6,7,8-tetrahydrofolate + L-serine. It participates in one-carbon metabolism; tetrahydrofolate interconversion. Its pathway is amino-acid biosynthesis; glycine biosynthesis; glycine from L-serine: step 1/1. Its function is as follows. Catalyzes the reversible interconversion of serine and glycine with tetrahydrofolate (THF) serving as the one-carbon carrier. This reaction serves as the major source of one-carbon groups required for the biosynthesis of purines, thymidylate, methionine, and other important biomolecules. Also exhibits THF-independent aldolase activity toward beta-hydroxyamino acids, producing glycine and aldehydes, via a retro-aldol mechanism. This Marinomonas sp. (strain MWYL1) protein is Serine hydroxymethyltransferase.